We begin with the raw amino-acid sequence, 399 residues long: Lymphoid enhancer-binding factor 1 (399 aa).

Residues 1 to 14 (MPQLSGGGGGGGGD) show a composition bias toward gly residues. Positions 1–62 (MPQLSGGGGG…IKSSLVNESE (62 aa)) are CTNNB1-binding. Positions 1–104 (MPQLSGGGGG…KHPDGGLYNK (104 aa)) are disordered. Basic and acidic residues-rich tracts occupy residues 24–45 (IPFK…SHPE) and 82–98 (PYHD…KHPD). Residue K27 forms a Glycyl lysine isopeptide (Lys-Gly) (interchain with G-Cter in SUMO) linkage. Residue S132 is modified to Phosphoserine. T155 carries the post-translational modification Phosphothreonine; by NLK. Residue S166 is modified to Phosphoserine; by NLK. Disordered regions lie at residues 166–192 (SPGS…PAPD) and 268–298 (VKQE…KRPH). K269 is covalently cross-linked (Glycyl lysine isopeptide (Lys-Gly) (interchain with G-Cter in SUMO)). Residues 269-296 (KQEHPHTDSDLMHVKPQHEQRKEQEPKR) show a composition bias toward basic and acidic residues. The segment at residues 299–367 (IKKPLNAFML…LHMQLYPGWS (69 aa)) is a DNA-binding region (HMG box). Residues 369–399 (RDNYGKKKKRKREKLQESASGTGPRMTAAYI) form a disordered region.

Belongs to the TCF/LEF family. Binds the armadillo repeat of CTNNB1 and forms a stable complex. Interacts with EP300, TLE1 and PIASG. Binds ALYREF/THOC4, MDFI and MDFIC. Interacts with NLK. Interacts with DAZAP2. In terms of processing, phosphorylated at Thr-155 and/or Ser-166 by NLK. Phosphorylation by NLK at these sites represses LEF1-mediated transcriptional activation of target genes of the canonical Wnt signaling pathway. As to expression, detected in thymus. Not detected in normal colon, but highly expressed in colon cancer biopsies and colon cancer cell lines. Expressed in several pancreatic tumors and weakly expressed in normal pancreatic tissue. Isoforms 1 and 5 are detected in several pancreatic cell lines.

It localises to the nucleus. Its function is as follows. Transcription factor that binds DNA in a sequence-specific manner. Participates in the Wnt signaling pathway. Activates transcription of target genes in the presence of CTNNB1 and EP300. PIAG antagonizes both Wnt-dependent and Wnt-independent activation by LEF1. TLE1, TLE2, TLE3 and TLE4 repress transactivation mediated by LEF1 and CTNNB1. Regulates T-cell receptor alpha enhancer function. Required for IL17A expressing gamma-delta T-cell maturation and development, via binding to regulator loci of BLK to modulate expression. Acts as a positive regulator of odontoblast differentiation during mesenchymal tooth germ formation, expression is repressed during the bell stage by MSX1-mediated inhibition of CTNNB1 signaling. May play a role in hair cell differentiation and follicle morphogenesis. In terms of biological role, transcriptionally activates MYC and CCND1 expression and enhances proliferation of pancreatic tumor cells. Lacks the CTNNB1 interaction domain and may therefore be an antagonist for Wnt signaling. Functionally, transcriptionally activates the fibronectin promoter, binds to and represses transcription from the E-cadherin promoter in a CTNNB1-independent manner, and is involved in reducing cellular aggregation and increasing cell migration of pancreatic cancer cells. The sequence is that of Lymphoid enhancer-binding factor 1 from Homo sapiens (Human).